The chain runs to 136 residues: Transcription antitermination protein NusB (136 aa).

This sequence belongs to the NusB family.

Functionally, involved in transcription antitermination. Required for transcription of ribosomal RNA (rRNA) genes. Binds specifically to the boxA antiterminator sequence of the ribosomal RNA (rrn) operons. This Kineococcus radiotolerans (strain ATCC BAA-149 / DSM 14245 / SRS30216) protein is Transcription antitermination protein NusB.